We begin with the raw amino-acid sequence, 86 residues long: Large ribosomal subunit protein bL27 (86 aa).

This sequence belongs to the bacterial ribosomal protein bL27 family.

In Xanthomonas axonopodis pv. citri (strain 306), this protein is Large ribosomal subunit protein bL27.